A 524-amino-acid polypeptide reads, in one-letter code: Importin subunit alpha-1 (524 aa).

The interval 1 to 42 (MGDEFRPSHEERSKMYKSNVRDQNEMRRKRREDEVQIRKNRR) is disordered. Residues 1-59 (MGDEFRPSHEERSKMYKSNVRDQNEMRRKRREDEVQIRKNRRDEKFERNRQITVQRSLS) form the IBB domain.

Belongs to the importin alpha family. In terms of assembly, forms a complex with an importin beta subunit. As to expression, adult germline tissues.

The protein resides in the cytoplasm. Binds specifically and directly to substrates containing either a simple or bipartite NLS motif. Promotes docking of import substrates to the nuclear envelope. Seems to act as a cytosolic receptor for both simple and bipartite NLS motifs. This chain is Importin subunit alpha-1 (ima-1), found in Caenorhabditis elegans.